The chain runs to 136 residues: MMSLSRSHLELIATILQNVLNLGLLTLGLILVLFLGKETVHLADALFVPEQASKYELVEGLVIYFLYFEFIALIVKYFKSGFHFPLRYFVYIGITAIVRLIIVDHKTPMDVLLYSAAILLLVITLWLCNSNRLRRE.

4 consecutive transmembrane segments (helical) span residues 15–35 (ILQN…VLFL), 55–75 (YELV…ALIV), 82–102 (FHFP…RLII), and 108–128 (PMDV…LWLC).

The protein belongs to the PsiE family.

It localises to the cell inner membrane. The polypeptide is Protein PsiE (Salmonella arizonae (strain ATCC BAA-731 / CDC346-86 / RSK2980)).